The chain runs to 1921 residues: Disks large homolog 5 (1921 aa).

Residues 1–90 (MEPQRRELLA…HLLPILYLNG (90 aa)) form the CARD domain. Residues 116 to 143 (ESSSSLSSVGTTGKAPSPPPLLTEQQAN) are disordered. The stretch at 139-601 (EQQANDTVEN…KEARFRQLMA (463 aa)) forms a coiled coil. Ser-264 and Ser-295 each carry phosphoserine. PDZ domains follow at residues 620 to 710 (VVEF…RRRK) and 705 to 796 (VVRR…LKVF). The interval 857–898 (ELGHSGGSSSFLHKPFSGSSSPVSPQACPSTSERSLNSFRSD) is disordered. A compositionally biased stretch (polar residues) spans 873-898 (SGSSSPVSPQACPSTSERSLNSFRSD). Ser-900 is modified (phosphoserine). The disordered stretch occupies residues 930–1121 (EVPLDKIDPE…RPKSAPSFRP (192 aa)). Thr-984 is subject to Phosphothreonine. Ser-1000 carries the phosphoserine modification. Position 1011 is a phosphothreonine (Thr-1011). Positions 1017-1030 (RRSDSIKFQHRLET) are enriched in basic and acidic residues. Ser-1021 bears the Phosphoserine mark. Residues 1045 to 1055 (TSPPSAPPPSM) are compositionally biased toward pro residues. Thr-1183 is modified (phosphothreonine). Disordered stretches follow at residues 1204-1227 (VLPC…SVQH), 1243-1266 (YSEM…SSSN), and 1280-1343 (PRYP…KDRP). Ser-1209 bears the Phosphoserine mark. Residues 1217–1227 (GSQSLSPSVQH) are compositionally biased toward polar residues. Low complexity predominate over residues 1252–1266 (SNSLPSSARLGSSSN). The residue at position 1263 (Ser-1263) is a Phosphoserine. The segment covering 1292-1324 (GSLSHSECSTPPRSPLNIDTLSSCSQPQTTAST) has biased composition (polar residues). Position 1334 is a phosphoserine (Ser-1334). The region spanning 1350 to 1429 (HVKVQKGSEP…TITILAQYNP (80 aa)) is the PDZ 3 domain. Composition is skewed to polar residues over residues 1434-1443 (LNSHSRSSSH), 1450-1460 (PHSTLQGSSAG), and 1483-1495 (AKQS…SVGD). A disordered region spans residues 1434–1501 (LNSHSRSSSH…SVGDTTKKTP (68 aa)). One can recognise a PDZ 4 domain in the interval 1504–1585 (RIVFIKKSQL…SLRLKVQYRH (82 aa)). The 69-residue stretch at 1596-1664 (GDSFYIRALY…PSKYVMDQEF (69 aa)) folds into the SH3 domain. Ser-1669 is modified (phosphoserine). Residues 1724–1907 (DSVSLAYQRV…ICTQILAMVS (184 aa)) form the Guanylate kinase-like domain.

Belongs to the MAGUK family. As to quaternary structure, interacts with MPP1. Interacts with CTNNB1 and with the third SH3 domain of SORBS3 to form a ternary complex. Interacts (via coiled-coil domain) with MARK3. Interacts (via PDZ domain 3) with STK3/MST2 and STK4/MST1. Interacts with SCRIB. Interacts with CTNB1. Interacts with SMO and (via PDZ4 or guanylate kinase-like domain) with KIF7. Brain (at protein level).

Its subcellular location is the cell junction. It is found in the cell membrane. It localises to the postsynaptic density. The protein localises to the cytoplasm. The protein resides in the cytoskeleton. Its subcellular location is the cilium basal body. Its function is as follows. Acts as a regulator of the Hippo signaling pathway. Negatively regulates the Hippo signaling pathway by mediating the interaction of MARK3 with STK3/4, bringing them together to promote MARK3-dependent hyperphosphorylation and inactivation of STK3 kinase activity toward LATS1. Positively regulates the Hippo signaling by mediating the interaction of SCRIB with STK4/MST1 and LATS1 which is important for the activation of the Hippo signaling pathway. Involved in regulating cell proliferation, maintenance of epithelial polarity, epithelial-mesenchymal transition (EMT), cell migration and invasion. Plays an important role in dendritic spine formation and synaptogenesis in cortical neurons; regulates synaptogenesis by enhancing the cell surface localization of N-cadherin. Acts as a positive regulator of hedgehog (Hh) signaling pathway. Plays a critical role in the early point of the SMO activity cycle by interacting with SMO at the ciliary base to induce the accumulation of KIF7 and GLI2 at the ciliary tip for GLI2 activation. This Mus musculus (Mouse) protein is Disks large homolog 5 (Dlg5).